Reading from the N-terminus, the 156-residue chain is Small ribosomal subunit protein uS7 (156 aa).

The protein belongs to the universal ribosomal protein uS7 family. Part of the 30S ribosomal subunit. Contacts proteins S9 and S11.

Its function is as follows. One of the primary rRNA binding proteins, it binds directly to 16S rRNA where it nucleates assembly of the head domain of the 30S subunit. Is located at the subunit interface close to the decoding center, probably blocks exit of the E-site tRNA. In Synechococcus sp. (strain CC9605), this protein is Small ribosomal subunit protein uS7.